A 310-amino-acid polypeptide reads, in one-letter code: Low affinity immunoglobulin gamma Fc region receptor II-b (310 aa).

An N-terminal signal peptide occupies residues 1–42 (MGILSFLPVLATESDWADCKSPQPWGHMLLWTAVLFLAPVAG). Residues 43–217 (TPAAPPKAVL…KPVTITVQAP (175 aa)) are Extracellular-facing. Ig-like C2-type domains follow at residues 48–127 (PKAV…VHLT) and 131–213 (EWLV…VTIT). 2 cysteine pairs are disulfide-bonded: C71-C113 and C152-C196. N-linked (GlcNAc...) asparagine glycans are attached at residues N106, N180, and N187. A helical membrane pass occupies residues 218–240 (SSSPMGIIVAVVTGIAVAAIVAA). At 241–310 (VVALIYCRKK…LEEPDDQNRI (70 aa)) the chain is on the cytoplasmic side. The short motif at 290-295 (ITYSLL) is the ITIM motif element. Residue Y292 is modified to Phosphotyrosine; by SRC-type Tyr-kinases.

As to quaternary structure, interacts with INPP5D/SHIP1. Interacts with FGR. Interacts with LYN. In terms of assembly, (Microbial infection) Isoform IIB1 interacts with measles virus protein N. Protein N is released in the blood following lysis of measles infected cells. This interaction presumably block inflammatory immune response. In terms of processing, phosphorylated by the SRC-type Tyr-kinases LYN and BLK. Is the most broadly distributed Fc-gamma-receptor. Expressed in monocyte, neutrophils, macrophages, basophils, eosinophils, Langerhans cells, B-cells, platelets cells and placenta (endothelial cells). Not detected in natural killer cells.

The protein resides in the cell membrane. Functionally, receptor for the Fc region of complexed or aggregated immunoglobulins gamma. Low affinity receptor. Involved in a variety of effector and regulatory functions such as phagocytosis of immune complexes and modulation of antibody production by B-cells. Binding to this receptor results in down-modulation of previous state of cell activation triggered via antigen receptors on B-cells (BCR), T-cells (TCR) or via another Fc receptor. Isoform IIB1 fails to mediate endocytosis or phagocytosis. Isoform IIB2 does not trigger phagocytosis. This Homo sapiens (Human) protein is Low affinity immunoglobulin gamma Fc region receptor II-b (FCGR2B).